Here is a 334-residue protein sequence, read N- to C-terminus: Beta-glucanase (334 aa).

A signal peptide spans 1–27 (MKNRVISLLMASLLLVLSVIVAPFYKA). Positions 28-248 (EAATVVNTPF…YVKYYPNGVP (221 aa)) constitute a GH16 domain. The active-site Nucleophile is Glu-136. Glu-140 (proton donor) is an active-site residue. A disordered region spans residues 246–265 (GVPQDNPTPTPTIAPSTPTN). The 68-residue stretch at 267–334 (NLPLKGDVNG…RYLIRAIPSL (68 aa)) folds into the Dockerin domain.

The protein belongs to the glycosyl hydrolase 16 family.

The enzyme catalyses Hydrolysis of (1-&gt;4)-beta-D-glucosidic linkages in beta-D-glucans containing (1-&gt;3)- and (1-&gt;4)-bonds.. The protein is Beta-glucanase (licB) of Acetivibrio thermocellus (Hungateiclostridium thermocellum).